Consider the following 435-residue polypeptide: Proline--tRNA ligase (435 aa).

It belongs to the class-II aminoacyl-tRNA synthetase family. ProS type 2 subfamily. In terms of assembly, homodimer.

It localises to the cytoplasm. The catalysed reaction is tRNA(Pro) + L-proline + ATP = L-prolyl-tRNA(Pro) + AMP + diphosphate. Functionally, catalyzes the attachment of proline to tRNA(Pro) in a two-step reaction: proline is first activated by ATP to form Pro-AMP and then transferred to the acceptor end of tRNA(Pro). The protein is Proline--tRNA ligase of Rhodospirillum rubrum (strain ATCC 11170 / ATH 1.1.1 / DSM 467 / LMG 4362 / NCIMB 8255 / S1).